Here is a 404-residue protein sequence, read N- to C-terminus: Phosphopentomutase (404 aa).

The Mn(2+) site is built by Asp-10, Asp-303, His-308, Asp-344, His-345, and His-356.

Belongs to the phosphopentomutase family. Mn(2+) is required as a cofactor.

The protein localises to the cytoplasm. It carries out the reaction 2-deoxy-alpha-D-ribose 1-phosphate = 2-deoxy-D-ribose 5-phosphate. It catalyses the reaction alpha-D-ribose 1-phosphate = D-ribose 5-phosphate. Its pathway is carbohydrate degradation; 2-deoxy-D-ribose 1-phosphate degradation; D-glyceraldehyde 3-phosphate and acetaldehyde from 2-deoxy-alpha-D-ribose 1-phosphate: step 1/2. In terms of biological role, isomerase that catalyzes the conversion of deoxy-ribose 1-phosphate (dRib-1-P) and ribose 1-phosphate (Rib-1-P) to deoxy-ribose 5-phosphate (dRib-5-P) and ribose 5-phosphate (Rib-5-P), respectively. The chain is Phosphopentomutase from Shewanella sp. (strain ANA-3).